Reading from the N-terminus, the 512-residue chain is uncharacterized protein (512 aa).

The first 22 residues, 1-22 (MVSSLIYSLCAVSGLLATTVNG), serve as a signal peptide directing secretion. Residue Asn-167 is glycosylated (N-linked (GlcNAc...) asparagine). Positions 251–282 (SAASPPIYEPDRQTDPEDPETGRNNNQGFEGL) are disordered.

Its subcellular location is the secreted. This is an uncharacterized protein from Arthroderma benhamiae (strain ATCC MYA-4681 / CBS 112371) (Trichophyton mentagrophytes).